An 815-amino-acid chain; its full sequence is Lon protease 2 (815 aa).

A Lon N-terminal domain is found at 19 to 212 (LPVLPLINTV…RLSVVLSQEI (194 aa)). 365–372 (GPPGVGKT) contributes to the ATP binding site. Residues 601–782 (RDEIGVATGM…DEVLPIAFVS (182 aa)) form the Lon proteolytic domain. Catalysis depends on residues S688 and K731.

This sequence belongs to the peptidase S16 family. In terms of assembly, homohexamer. Organized in a ring with a central cavity.

It is found in the cytoplasm. It catalyses the reaction Hydrolysis of proteins in presence of ATP.. In terms of biological role, ATP-dependent serine protease that mediates the selective degradation of mutant and abnormal proteins as well as certain short-lived regulatory proteins. Required for cellular homeostasis and for survival from DNA damage and developmental changes induced by stress. Degrades polypeptides processively to yield small peptide fragments that are 5 to 10 amino acids long. Binds to DNA in a double-stranded, site-specific manner. This Herpetosiphon aurantiacus (strain ATCC 23779 / DSM 785 / 114-95) protein is Lon protease 2.